Consider the following 206-residue polypeptide: Protein GrpE (206 aa).

The tract at residues 1 to 64 (MSKKASMHKE…KALEEAQQQA (64 aa)) is disordered. The span at 46–58 (SDAKVQELEKALE) shows a compositional bias: basic and acidic residues.

It belongs to the GrpE family. As to quaternary structure, homodimer.

The protein resides in the cytoplasm. Functionally, participates actively in the response to hyperosmotic and heat shock by preventing the aggregation of stress-denatured proteins, in association with DnaK and GrpE. It is the nucleotide exchange factor for DnaK and may function as a thermosensor. Unfolded proteins bind initially to DnaJ; upon interaction with the DnaJ-bound protein, DnaK hydrolyzes its bound ATP, resulting in the formation of a stable complex. GrpE releases ADP from DnaK; ATP binding to DnaK triggers the release of the substrate protein, thus completing the reaction cycle. Several rounds of ATP-dependent interactions between DnaJ, DnaK and GrpE are required for fully efficient folding. The protein is Protein GrpE of Prosthecochloris aestuarii (strain DSM 271 / SK 413).